The sequence spans 76 residues: ATP synthase peripheral stalk subunit F6, mitochondrial (76 aa).

N6-acetyllysine is present on residues Lys-9, Lys-14, and Lys-47. N6-acetyllysine; alternate occurs at positions 52 and 67. Lys-52 and Lys-67 each carry N6-succinyllysine; alternate. Lys-73 is modified (N6-acetyllysine). The residue at position 76 (Ser-76) is a Phosphoserine.

The protein belongs to the eukaryotic ATPase subunit F6 family. In terms of assembly, component of the ATP synthase complex composed at least of ATP5F1A/subunit alpha, ATP5F1B/subunit beta, ATP5MC1/subunit c (homooctomer), MT-ATP6/subunit a, MT-ATP8/subunit 8, ATP5ME/subunit e, ATP5MF/subunit f, ATP5MG/subunit g, ATP5MK/subunit k, ATP5MJ/subunit j, ATP5F1C/subunit gamma, ATP5F1D/subunit delta, ATP5F1E/subunit epsilon, ATP5PF/subunit F6, ATP5PB/subunit b, ATP5PD/subunit d, ATP5PO/subunit OSCP. ATP synthase complex consists of a soluble F(1) head domain (subunits alpha(3) and beta(3)) - the catalytic core - and a membrane F(0) domain - the membrane proton channel (subunits c, a, 8, e, f, g, k and j). These two domains are linked by a central stalk (subunits gamma, delta, and epsilon) rotating inside the F1 region and a stationary peripheral stalk (subunits F6, b, d, and OSCP).

Its subcellular location is the mitochondrion. It is found in the mitochondrion inner membrane. Functionally, subunit F6, of the mitochondrial membrane ATP synthase complex (F(1)F(0) ATP synthase or Complex V) that produces ATP from ADP in the presence of a proton gradient across the membrane which is generated by electron transport complexes of the respiratory chain. ATP synthase complex consist of a soluble F(1) head domain - the catalytic core - and a membrane F(1) domain - the membrane proton channel. These two domains are linked by a central stalk rotating inside the F(1) region and a stationary peripheral stalk. During catalysis, ATP synthesis in the catalytic domain of F(1) is coupled via a rotary mechanism of the central stalk subunits to proton translocation. In vivo, can only synthesize ATP although its ATP hydrolase activity can be activated artificially in vitro. Part of the complex F(0) domain. Part of the complex F(0) domain and the peripheric stalk, which acts as a stator to hold the catalytic alpha(3)beta(3) subcomplex and subunit a/ATP6 static relative to the rotary elements. The sequence is that of ATP synthase peripheral stalk subunit F6, mitochondrial from Sus scrofa (Pig).